Reading from the N-terminus, the 612-residue chain is GPI mannosyltransferase 3 (612 aa).

The next 2 helical transmembrane spans lie at 92–112 (LLAI…AGLM) and 145–165 (VIYA…YFTI). N-linked (GlcNAc...) asparagine glycosylation occurs at N188. 3 helical membrane passes run 192–212 (IALL…RTFI), 254–274 (RPSN…NLLL), and 288–308 (ILVV…YFYN). N-linked (GlcNAc...) asparagine glycosylation is present at N321. Residues 339 to 359 (LLQSLPIMLGYSLPLFIYGLF) traverse the membrane as a helical segment. A glycan (N-linked (GlcNAc...) asparagine) is linked at N361. The next 3 membrane-spanning stretches (helical) occupy residues 371–391 (FGAL…YSYL), 398–418 (FIYP…LKLA), and 429–449 (EYVW…TTFQ). 3 N-linked (GlcNAc...) asparagine glycosylation sites follow: N508, N526, and N550.

Belongs to the glycosyltransferase 22 family. PIGB subfamily.

The protein resides in the endoplasmic reticulum membrane. The protein operates within glycolipid biosynthesis; glycosylphosphatidylinositol-anchor biosynthesis. In terms of biological role, mannosyltransferase involved in glycosylphosphatidylinositol-anchor biosynthesis. Transfers the third mannose to Man2-GlcN-acyl-PI during GPI precursor assembly. The protein is GPI mannosyltransferase 3 (GPI10) of Candida glabrata (strain ATCC 2001 / BCRC 20586 / JCM 3761 / NBRC 0622 / NRRL Y-65 / CBS 138) (Yeast).